We begin with the raw amino-acid sequence, 280 residues long: Lacto-N-neotetraose biosynthesis glycosyltransferase LgtE (280 aa).

The protein belongs to the glycosyltransferase 25 family.

The protein operates within glycan metabolism; lacto-N-neotetraose biosynthesis. It functions in the pathway bacterial outer membrane biogenesis; lipooligosaccharide biosynthesis. Its function is as follows. Adds the first galactose to the lacto-N-tetraose chain in lipooligosaccharide (LOS). The protein is Lacto-N-neotetraose biosynthesis glycosyltransferase LgtE (lgtE) of Neisseria gonorrhoeae.